The chain runs to 405 residues: Amino acid transporter AVT1I (405 aa).

11 helical membrane-spanning segments follow: residues 22–42 (CFNALNALSGIGILSVPYSLA), 46–66 (WLSLSLLLLLAVTAFYTSLLI), 93–113 (IIVSVFMHLELYLVTTGFLIL), 140–160 (FMATVAFVIMPTLWWDNLSVL), 169–189 (LATTVTLGSISWIGAFDGIGF), 201–221 (IPTALSLYAFCYGAHPVLPTL), 234–254 (VLLICFILCTIGYTSMAVLGY), 278–298 (VAIYTTLVNPVAKYALMITPT), 318–338 (LLISTFFIISSVVIAETLPFF), 343–363 (SLVGALLSVTVSILLPCLCYL), and 377–397 (IMLFGMVVMSVFVGVIGTYIA).

The protein belongs to the amino acid/polyamine transporter 2 family. Amino acid/auxin permease (AAAP) (TC 2.A.18.5) subfamily.

The protein localises to the membrane. This Arabidopsis thaliana (Mouse-ear cress) protein is Amino acid transporter AVT1I.